A 320-amino-acid polypeptide reads, in one-letter code: Mitochondrial thiamine pyrophosphate carrier (320 aa).

Solcar repeat units follow at residues 13–106, 116–202, and 214–309; these read NTKL…LTEL, REFS…LKHL, and NENL…FCNV. Residues 19–39 form a helical membrane-spanning segment; that stretch reads AVAGSVSGLVTRALISPFDVI. Serine 51 is modified (phosphoserine). The next 4 helical transmembrane spans lie at 87–107, 122–142, 173–193, and 220–240; these read ILSI…TELV, FVCG…VDVL, VFYK…GLQF, and LLCG…LDLF. A Substrate recognition motif is present at residues 241-246; the sequence is KKRLQV. A helical transmembrane segment spans residues 293 to 313; it reads ALSTGFMFFWYEFFCNVFHCM.

Belongs to the mitochondrial carrier (TC 2.A.29) family.

Its subcellular location is the mitochondrion membrane. The catalysed reaction is thiamine phosphate(out) + thiamine diphosphate(in) = thiamine phosphate(in) + thiamine diphosphate(out). In terms of biological role, mitochondrial transporter mediating uptake of thiamine diphosphate into mitochondria. It is not clear if the antiporter activity is affected by the membrane potential or by the proton electrochemical gradient. This chain is Mitochondrial thiamine pyrophosphate carrier (SLC25A19), found in Macaca fascicularis (Crab-eating macaque).